Here is a 645-residue protein sequence, read N- to C-terminus: Chaperone protein DnaK (645 aa).

Residue Thr-201 is modified to Phosphothreonine; by autocatalysis. Residues 606–629 (NTNNATAGDNNTTDTGSSSNSDGS) are compositionally biased toward low complexity. The interval 606–645 (NTNNATAGDNNTTDTGSSSNSDGSKVVDSDYQEIDKKDGK) is disordered. A compositionally biased stretch (basic and acidic residues) spans 630 to 645 (KVVDSDYQEIDKKDGK).

Belongs to the heat shock protein 70 family.

Acts as a chaperone. This is Chaperone protein DnaK from Ehrlichia ruminantium (strain Welgevonden).